Here is a 225-residue protein sequence, read N- to C-terminus: UPF0128 protein PH1314 (225 aa).

The protein belongs to the UPF0128 family.

This is UPF0128 protein PH1314 from Pyrococcus horikoshii (strain ATCC 700860 / DSM 12428 / JCM 9974 / NBRC 100139 / OT-3).